The primary structure comprises 505 residues: Cytochrome P450 76A2 (505 aa).

Cys-448 contributes to the heme binding site.

Belongs to the cytochrome P450 family. Requires heme as cofactor.

This Solanum melongena (Eggplant) protein is Cytochrome P450 76A2 (CYP76A2).